The chain runs to 497 residues: 4,4'-diaponeurosporene oxygenase (497 aa).

Residue 7–19 (VIGGGLGGISAAI) coordinates FAD.

Belongs to the carotenoid/retinoid oxidoreductase family. CrtP subfamily. FAD serves as cofactor.

It carries out the reaction all-trans-4,4'-diaponeurosporene + 2 AH2 + 2 O2 = 4,4'-diaponeurosporenal + 2 A + 3 H2O. The protein operates within carotenoid biosynthesis; staphyloxanthin biosynthesis; staphyloxanthin from farnesyl diphosphate: step 3/5. In terms of biological role, involved in the biosynthesis of the yellow-orange carotenoid staphyloxanthin, which plays a role in the virulence via its protective function against oxidative stress. Catalyzes the oxidation of the terminal methyl side group of 4,4'-diaponeurosporene to form 4,4'-diaponeurosporen-4-al. This is 4,4'-diaponeurosporene oxygenase from Staphylococcus aureus (strain MSSA476).